We begin with the raw amino-acid sequence, 374 residues long: Spore germination protein GerLB (374 aa).

10 helical membrane passes run 16–36 (IGFAVSSTIIGIGALSMPRDI), 44–64 (DGWIILLLGGLICAVLGWFVT), 86–106 (PVAYTISSILVLTFAALTAYE), 122–142 (TPIQLLSFFFLLVVIYGIAGS), 149–169 (LNVLFLPIVLIAIVLLSLLNI), 192–212 (VKNSIFTFIGFEVALFYAVLL), 227–247 (AVMVNVLSYILIYVTCISVFT), 279–301 (FFTTWIITIYNTTAMYYDVASLL), 313–333 (IFIFISAPIIFMVNMIPSSLN), and 341–361 (YLAWIDMGCVVLAPLLVLIVY).

It belongs to the amino acid-polyamine-organocation (APC) superfamily. Spore germination protein (SGP) (TC 2.A.3.9) family.

It localises to the membrane. Its function is as follows. Contributes to the L-alanine germination response. In Bacillus cereus, this protein is Spore germination protein GerLB (gerLB).